Consider the following 168-residue polypeptide: HTH-type transcriptional regulator IscR (168 aa).

In terms of domain architecture, HTH rrf2-type spans 2–131; that stretch reads KLTSKGRYAV…DGISLGELMV (130 aa). Residues 28–51 constitute a DNA-binding region (H-T-H motif); the sequence is LADISERQGISLSYLEQLFSKLRK. [2Fe-2S] cluster-binding residues include cysteine 92, cysteine 98, and cysteine 104.

It depends on [2Fe-2S] cluster as a cofactor.

Functionally, regulates the transcription of several operons and genes involved in the biogenesis of Fe-S clusters and Fe-S-containing proteins. In Aliivibrio salmonicida (strain LFI1238) (Vibrio salmonicida (strain LFI1238)), this protein is HTH-type transcriptional regulator IscR.